A 369-amino-acid polypeptide reads, in one-letter code: Histone deacetylase 8 (369 aa).

The interval 5–316 (LLPVYIHSAE…WTYLTALIVG (312 aa)) is histone deacetylase. Substrate is bound at residue aspartate 93. Histidine 135 functions as the Proton acceptor in the catalytic mechanism. Glycine 143 lines the substrate pocket. 3 residues coordinate a divalent metal cation: aspartate 170, histidine 172, and aspartate 259. Tyrosine 298 provides a ligand contact to substrate.

Belongs to the histone deacetylase family. HD type 1 subfamily. A divalent metal cation serves as cofactor.

It localises to the nucleus. Its subcellular location is the chromosome. The protein localises to the cytoplasm. It catalyses the reaction N(6)-acetyl-L-lysyl-[histone] + H2O = L-lysyl-[histone] + acetate. It carries out the reaction N(6)-acetyl-L-lysyl-[protein] + H2O = L-lysyl-[protein] + acetate. The catalysed reaction is N(6)-(2E)-butenoyl-L-lysyl-[protein] + H2O = (2E)-2-butenoate + L-lysyl-[protein]. Its activity is inhibited by trichostatin A (TSA) and butyrate, 2 well known histone deacetylase inhibitors. Its function is as follows. Histone deacetylase that catalyzes the deacetylation of lysine residues on the N-terminal part of the core histones (H2A, H2B, H3 and H4). Histone deacetylation gives a tag for epigenetic repression and plays an important role in transcriptional regulation, cell cycle progression and developmental events. Histone deacetylases act via the formation of large multiprotein complexes. Also involved in the deacetylation of non-histone proteins. In addition to protein deacetylase activity, also has protein-lysine deacylase activity: acts as a protein decrotonylase by mediating decrotonylation ((2E)-butenoyl) of histones. The sequence is that of Histone deacetylase 8 (hdac8) from Xenopus tropicalis (Western clawed frog).